The sequence spans 207 residues: Large ribosomal subunit protein uL4 (207 aa).

Residues 45 to 78 (RQGTHAVKNRSARRGGGRKPWRQKGTGRARQGSI) are disordered. Residues 51-71 (VKNRSARRGGGRKPWRQKGTG) show a composition bias toward basic residues.

Belongs to the universal ribosomal protein uL4 family. Part of the 50S ribosomal subunit.

One of the primary rRNA binding proteins, this protein initially binds near the 5'-end of the 23S rRNA. It is important during the early stages of 50S assembly. It makes multiple contacts with different domains of the 23S rRNA in the assembled 50S subunit and ribosome. Its function is as follows. Forms part of the polypeptide exit tunnel. The polypeptide is Large ribosomal subunit protein uL4 (Lactiplantibacillus plantarum (strain ATCC BAA-793 / NCIMB 8826 / WCFS1) (Lactobacillus plantarum)).